The primary structure comprises 272 residues: 1,4-dihydroxy-2-naphthoyl-CoA synthase (272 aa).

Residues Arg-33, 72–76 (SGGDQ), Tyr-84, 116–120 (YAIGG), Thr-142, Ser-148, Tyr-245, and Lys-260 each bind substrate. 141 to 143 (QTG) contacts hydrogencarbonate.

This sequence belongs to the enoyl-CoA hydratase/isomerase family. MenB subfamily. The cofactor is hydrogencarbonate.

The enzyme catalyses 2-succinylbenzoyl-CoA + H(+) = 1,4-dihydroxy-2-naphthoyl-CoA + H2O. It functions in the pathway quinol/quinone metabolism; 1,4-dihydroxy-2-naphthoate biosynthesis; 1,4-dihydroxy-2-naphthoate from chorismate: step 6/7. Its pathway is quinol/quinone metabolism; menaquinone biosynthesis. In terms of biological role, converts o-succinylbenzoyl-CoA (OSB-CoA) to 1,4-dihydroxy-2-naphthoyl-CoA (DHNA-CoA). The chain is 1,4-dihydroxy-2-naphthoyl-CoA synthase from Staphylococcus epidermidis (strain ATCC 35984 / DSM 28319 / BCRC 17069 / CCUG 31568 / BM 3577 / RP62A).